The sequence spans 177 residues: Large ribosomal subunit protein uL6 (177 aa).

It belongs to the universal ribosomal protein uL6 family. In terms of assembly, part of the 50S ribosomal subunit.

In terms of biological role, this protein binds to the 23S rRNA, and is important in its secondary structure. It is located near the subunit interface in the base of the L7/L12 stalk, and near the tRNA binding site of the peptidyltransferase center. This chain is Large ribosomal subunit protein uL6, found in Rickettsia africae (strain ESF-5).